The chain runs to 569 residues: Protein THEMIS3 (569 aa).

CABIT stretches follow at residues methionine 1–aspartate 254 and arginine 255–serine 523.

It belongs to the themis family. As to expression, specifically expressed in the intestine.

The protein is Protein THEMIS3 (Themis3) of Mus musculus (Mouse).